A 277-amino-acid chain; its full sequence is Inositol monophosphatase 1 (277 aa).

Mg(2+) contacts are provided by Glu-70, Asp-90, Ile-92, and Asp-93. Glu-70 is a binding site for substrate. Residue 92-95 (IDGT) coordinates substrate. Thr-168 is modified (phosphothreonine). Substrate is bound by residues 194-196 (GTA), Glu-213, and Asp-220. Asp-220 serves as a coordination point for Mg(2+).

Belongs to the inositol monophosphatase superfamily. In terms of assembly, homodimer. The cofactor is Mg(2+). In terms of processing, the N-terminus is blocked.

Its subcellular location is the cytoplasm. It carries out the reaction a myo-inositol phosphate + H2O = myo-inositol + phosphate. It catalyses the reaction 1D-myo-inositol 1-phosphate + H2O = myo-inositol + phosphate. The enzyme catalyses 1D-myo-inositol 2-phosphate + H2O = myo-inositol + phosphate. The catalysed reaction is 1D-myo-inositol 3-phosphate + H2O = myo-inositol + phosphate. It carries out the reaction 1D-myo-inositol 4-phosphate + H2O = myo-inositol + phosphate. It catalyses the reaction 1D-myo-inositol 5-phosphate + H2O = myo-inositol + phosphate. The enzyme catalyses 1D-myo-inositol 6-phosphate + H2O = myo-inositol + phosphate. The catalysed reaction is scyllo-inositol 1-phosphate + H2O = scyllo-inositol + phosphate. It carries out the reaction alpha-D-galactose 1-phosphate + H2O = D-galactose + phosphate. It catalyses the reaction alpha-D-glucose 1-phosphate + H2O = D-glucose + phosphate. The enzyme catalyses D-glucose 6-phosphate + H2O = D-glucose + phosphate. The catalysed reaction is beta-D-fructose 1-phosphate + H2O = D-fructose + phosphate. It carries out the reaction glycerol 2-phosphate + H2O = glycerol + phosphate. It catalyses the reaction adenosine 2'-phosphate + H2O = adenosine + phosphate. It participates in polyol metabolism; myo-inositol biosynthesis; myo-inositol from D-glucose 6-phosphate: step 2/2. Its activity is regulated as follows. Activity with myo-inositol monophosphate and D-galactose 1-phosphate is inhibited by Li(+), Ca(2+) and Mn(2+), but also by Mg(2+) at concentrations above 3 mM. Functionally, phosphatase involved in the dephosphorylation of myo-inositol monophosphate to generate myo-inositol. Is also able to dephosphorylate scyllo-inositol-phosphate, myo-inositol 1,4-diphosphate, scyllo-inositol-1,3-diphosphate and scyllo-inositol-1,4-diphosphate. Also dephosphorylates in vitro other sugar-phosphates including D-galactose-1-phosphate, glucose-1-phosphate, glucose-6-phosphate, fructose-1-phosphate, beta-glycerophosphate and 2'-AMP. Responsible for the provision of inositol required for synthesis of phosphatidylinositol and polyphosphoinositides, and involved in maintaining normal brain function. Has been implicated as the pharmacological target for lithium Li(+) action in brain. Is equally active with myo-inositol monophosphate and D-galactose 1-phosphate. The sequence is that of Inositol monophosphatase 1 (IMPA1) from Bos taurus (Bovine).